The sequence spans 93 residues: Pyrimidine/purine nucleoside phosphorylase (93 aa).

The protein belongs to the nucleoside phosphorylase PpnP family.

It carries out the reaction a purine D-ribonucleoside + phosphate = a purine nucleobase + alpha-D-ribose 1-phosphate. It catalyses the reaction adenosine + phosphate = alpha-D-ribose 1-phosphate + adenine. The enzyme catalyses cytidine + phosphate = cytosine + alpha-D-ribose 1-phosphate. The catalysed reaction is guanosine + phosphate = alpha-D-ribose 1-phosphate + guanine. It carries out the reaction inosine + phosphate = alpha-D-ribose 1-phosphate + hypoxanthine. It catalyses the reaction thymidine + phosphate = 2-deoxy-alpha-D-ribose 1-phosphate + thymine. The enzyme catalyses uridine + phosphate = alpha-D-ribose 1-phosphate + uracil. The catalysed reaction is xanthosine + phosphate = alpha-D-ribose 1-phosphate + xanthine. Functionally, catalyzes the phosphorolysis of diverse nucleosides, yielding D-ribose 1-phosphate and the respective free bases. Can use uridine, adenosine, guanosine, cytidine, thymidine, inosine and xanthosine as substrates. Also catalyzes the reverse reactions. The sequence is that of Pyrimidine/purine nucleoside phosphorylase from Photobacterium profundum (strain SS9).